The primary structure comprises 291 residues: 33 kDa chaperonin (291 aa).

2 disulfides stabilise this stretch: Cys229–Cys231 and Cys262–Cys265.

Belongs to the HSP33 family. In terms of processing, under oxidizing conditions two disulfide bonds are formed involving the reactive cysteines. Under reducing conditions zinc is bound to the reactive cysteines and the protein is inactive.

The protein resides in the cytoplasm. Redox regulated molecular chaperone. Protects both thermally unfolding and oxidatively damaged proteins from irreversible aggregation. Plays an important role in the bacterial defense system toward oxidative stress. The protein is 33 kDa chaperonin of Vibrio vulnificus (strain YJ016).